The primary structure comprises 92 residues: Pyrimidine/purine nucleoside phosphorylase (92 aa).

The protein belongs to the nucleoside phosphorylase PpnP family.

The catalysed reaction is a purine D-ribonucleoside + phosphate = a purine nucleobase + alpha-D-ribose 1-phosphate. It catalyses the reaction adenosine + phosphate = alpha-D-ribose 1-phosphate + adenine. It carries out the reaction cytidine + phosphate = cytosine + alpha-D-ribose 1-phosphate. The enzyme catalyses guanosine + phosphate = alpha-D-ribose 1-phosphate + guanine. The catalysed reaction is inosine + phosphate = alpha-D-ribose 1-phosphate + hypoxanthine. It catalyses the reaction thymidine + phosphate = 2-deoxy-alpha-D-ribose 1-phosphate + thymine. It carries out the reaction uridine + phosphate = alpha-D-ribose 1-phosphate + uracil. The enzyme catalyses xanthosine + phosphate = alpha-D-ribose 1-phosphate + xanthine. In terms of biological role, catalyzes the phosphorolysis of diverse nucleosides, yielding D-ribose 1-phosphate and the respective free bases. Can use uridine, adenosine, guanosine, cytidine, thymidine, inosine and xanthosine as substrates. Also catalyzes the reverse reactions. The chain is Pyrimidine/purine nucleoside phosphorylase from Rhodopirellula baltica (strain DSM 10527 / NCIMB 13988 / SH1).